Reading from the N-terminus, the 421-residue chain is D-amino acid dehydrogenase (421 aa).

3–17 lines the FAD pocket; sequence VIVLGSGVIGVASAY.

Belongs to the DadA oxidoreductase family. FAD serves as cofactor.

It catalyses the reaction a D-alpha-amino acid + A + H2O = a 2-oxocarboxylate + AH2 + NH4(+). It participates in amino-acid degradation; D-alanine degradation; NH(3) and pyruvate from D-alanine: step 1/1. Functionally, oxidative deamination of D-amino acids. In Acinetobacter baumannii (strain SDF), this protein is D-amino acid dehydrogenase.